A 288-amino-acid polypeptide reads, in one-letter code: Light-independent protochlorophyllide reductase iron-sulfur ATP-binding protein (288 aa).

Residues 10-15 (GIGKST) and lysine 39 contribute to the ATP site. Serine 14 serves as a coordination point for Mg(2+). Residues cysteine 95 and cysteine 129 each coordinate [4Fe-4S] cluster. An ATP-binding site is contributed by 180–181 (NR).

The protein belongs to the NifH/BchL/ChlL family. In terms of assembly, homodimer. Protochlorophyllide reductase is composed of three subunits; ChlL, ChlN and ChlB. It depends on [4Fe-4S] cluster as a cofactor.

The enzyme catalyses chlorophyllide a + oxidized 2[4Fe-4S]-[ferredoxin] + 2 ADP + 2 phosphate = protochlorophyllide a + reduced 2[4Fe-4S]-[ferredoxin] + 2 ATP + 2 H2O. It participates in porphyrin-containing compound metabolism; chlorophyll biosynthesis (light-independent). Functionally, component of the dark-operative protochlorophyllide reductase (DPOR) that uses Mg-ATP and reduced ferredoxin to reduce ring D of protochlorophyllide (Pchlide) to form chlorophyllide a (Chlide). This reaction is light-independent. The L component serves as a unique electron donor to the NB-component of the complex, and binds Mg-ATP. This chain is Light-independent protochlorophyllide reductase iron-sulfur ATP-binding protein, found in Trichodesmium erythraeum (strain IMS101).